The sequence spans 231 residues: Large ribosomal subunit protein uL1 (231 aa).

It belongs to the universal ribosomal protein uL1 family. As to quaternary structure, part of the 50S ribosomal subunit.

Its function is as follows. Binds directly to 23S rRNA. The L1 stalk is quite mobile in the ribosome, and is involved in E site tRNA release. In terms of biological role, protein L1 is also a translational repressor protein, it controls the translation of the L11 operon by binding to its mRNA. This Chromobacterium violaceum (strain ATCC 12472 / DSM 30191 / JCM 1249 / CCUG 213 / NBRC 12614 / NCIMB 9131 / NCTC 9757 / MK) protein is Large ribosomal subunit protein uL1.